The primary structure comprises 599 residues: MTTPAPLTGLLPLNPEQLARLQAATTDLTPEQLAWVSGYFWGVLNPRSGAVAVTPVPERKMPRVTLISASQTGNARRVAEALRDDLLAANLNVTLVNAGDYKFKQIASEKLLVIVTSTQGEGEPPEEAVALHKFLFSKKAPKLENTAFAVFSLGDTSYEFFCQSGKDFDSKLAELGGERLLDRVDADVEYQAAASEWRARVVDVLKSRAPVAAPSQSVATGAVNDIHTSPYTKDAPLIATLSVNQKITGRNSEKDVRHIEIDLGDSGLRYQPGDALGVWYQNDPALVKELVELLWLKGDEPVTVDGKTLPLAEALEWHFELTVNTANIVENYATLTRSESLLPLVGDKAQLQHYAATTPIVDMVRFSPAQLDAQALIDLLRPLTPRLYSIASAQAEVESEVHITVGVVRYDIEGRARAGGASSFLADRVEEEGEVRVFIEHNDNFRLPANPETPVIMIGPGTGIAPFRSFMQQRAAEGVEGKNWLFFGNPHFTEDFLYQVEWQRYVKEGVLSRIDLAWSRDQKEKIYVQDKLREQGAELWRWINDGAHIYVCGDARRMAADVEKALLEVIAEFGGMDLESADEYLSELRVERRYQRDVY.

The Flavodoxin-like domain maps to valine 64–valine 202. Residues serine 70 to alanine 75, serine 117 to glycine 120, and leucine 153 to cysteine 162 each bind FMN. The FAD-binding FR-type domain maps to aspartate 234–proline 448. Residues threonine 322, alanine 356, arginine 386 to serine 389, threonine 404 to glycine 406, tyrosine 410, and glycine 419 to serine 422 each bind FAD. NADP(+) contacts are provided by residues serine 519–arginine 520, lysine 525–glutamine 529, and aspartate 561. Tyrosine 599 contributes to the FAD binding site.

Belongs to the NADPH-dependent sulphite reductase flavoprotein subunit CysJ family. It in the N-terminal section; belongs to the flavodoxin family. This sequence in the C-terminal section; belongs to the flavoprotein pyridine nucleotide cytochrome reductase family. Alpha(8)-beta(8). The alpha component is a flavoprotein, the beta component is a hemoprotein. The cofactor is FAD. FMN is required as a cofactor.

It catalyses the reaction hydrogen sulfide + 3 NADP(+) + 3 H2O = sulfite + 3 NADPH + 4 H(+). The protein operates within sulfur metabolism; hydrogen sulfide biosynthesis; hydrogen sulfide from sulfite (NADPH route): step 1/1. Component of the sulfite reductase complex that catalyzes the 6-electron reduction of sulfite to sulfide. This is one of several activities required for the biosynthesis of L-cysteine from sulfate. The flavoprotein component catalyzes the electron flow from NADPH -&gt; FAD -&gt; FMN to the hemoprotein component. The chain is Sulfite reductase [NADPH] flavoprotein alpha-component from Salmonella typhimurium (strain LT2 / SGSC1412 / ATCC 700720).